We begin with the raw amino-acid sequence, 514 residues long: ATP synthase subunit alpha (514 aa).

170–177 (GDRQIGKT) lines the ATP pocket.

This sequence belongs to the ATPase alpha/beta chains family. F-type ATPases have 2 components, CF(1) - the catalytic core - and CF(0) - the membrane proton channel. CF(1) has five subunits: alpha(3), beta(3), gamma(1), delta(1), epsilon(1). CF(0) has three main subunits: a(1), b(2) and c(9-12). The alpha and beta chains form an alternating ring which encloses part of the gamma chain. CF(1) is attached to CF(0) by a central stalk formed by the gamma and epsilon chains, while a peripheral stalk is formed by the delta and b chains.

The protein localises to the cell inner membrane. The catalysed reaction is ATP + H2O + 4 H(+)(in) = ADP + phosphate + 5 H(+)(out). In terms of biological role, produces ATP from ADP in the presence of a proton gradient across the membrane. The alpha chain is a regulatory subunit. The polypeptide is ATP synthase subunit alpha (Pseudomonas fluorescens (strain Pf0-1)).